The sequence spans 617 residues: UvrABC system protein C (617 aa).

Residues glutamate 12–valine 91 form the GIY-YIG domain. Residues glutamate 203–isoleucine 238 enclose the UVR domain.

Belongs to the UvrC family. In terms of assembly, interacts with UvrB in an incision complex.

The protein resides in the cytoplasm. Functionally, the UvrABC repair system catalyzes the recognition and processing of DNA lesions. UvrC both incises the 5' and 3' sides of the lesion. The N-terminal half is responsible for the 3' incision and the C-terminal half is responsible for the 5' incision. The protein is UvrABC system protein C of Caldanaerobacter subterraneus subsp. tengcongensis (strain DSM 15242 / JCM 11007 / NBRC 100824 / MB4) (Thermoanaerobacter tengcongensis).